Reading from the N-terminus, the 393-residue chain is Putative competence-damage inducible protein (393 aa).

This sequence belongs to the CinA family.

The sequence is that of Putative competence-damage inducible protein from Streptococcus suis (strain 05ZYH33).